Reading from the N-terminus, the 583-residue chain is MNHKQITTLWCRVIVEELIRQGAGFFCISPGSRSTPLTLAVAANPNARFRMFPDERSAGFYALGYARAAGKPAVLVCTSGTAVANYFPAVVEASADAQPMLVLSADRPFELLDAGANQTIRQQDIFGSYTRWNLELPEPGTGTPLASLLSTVGQAVKRSLGSPAGPVHLNLPFREPLEPESHDLAHPWVEPLRNWLASEQPWCRFEQPRTAPDANALTALQQILANAERPLFVAGSMDKADDAEAVASLADSLGILLFADLTSGLRLTNKCTPWQLAFQNETFATSFKPDVVIHFGGALIGKQPAMTLRKEPPFHYVVVRNHPGRFNPDHNVTLSIEASPAAVVSALSECRKPAEMGGFAALFSEVAHTIDTAACAPDEPVNEISAPRIVSSLTDGKHALFVANSMPARDMDLYAAPVSEKPLRVELNRGVSGIDGIISTAAGFSAGLDKPTTLLIGDISFLHDLNALSLLDNPTNPLIVIVLNNNGGGIFSFLPIASQTDRLDECFATPQNFSIESAARTFDLDYASPASNREFTELYADALKRNKSLVIEIRSNRQANLLLHRTLKAKLDPIFEKAGIFGN.

The protein belongs to the TPP enzyme family. MenD subfamily. Homodimer. It depends on Mg(2+) as a cofactor. Requires Mn(2+) as cofactor. Thiamine diphosphate is required as a cofactor.

It carries out the reaction isochorismate + 2-oxoglutarate + H(+) = 5-enolpyruvoyl-6-hydroxy-2-succinyl-cyclohex-3-ene-1-carboxylate + CO2. It participates in quinol/quinone metabolism; 1,4-dihydroxy-2-naphthoate biosynthesis; 1,4-dihydroxy-2-naphthoate from chorismate: step 2/7. Its pathway is quinol/quinone metabolism; menaquinone biosynthesis. Functionally, catalyzes the thiamine diphosphate-dependent decarboxylation of 2-oxoglutarate and the subsequent addition of the resulting succinic semialdehyde-thiamine pyrophosphate anion to isochorismate to yield 2-succinyl-5-enolpyruvyl-6-hydroxy-3-cyclohexene-1-carboxylate (SEPHCHC). The protein is 2-succinyl-5-enolpyruvyl-6-hydroxy-3-cyclohexene-1-carboxylate synthase of Chlorobaculum parvum (strain DSM 263 / NCIMB 8327) (Chlorobium vibrioforme subsp. thiosulfatophilum).